The primary structure comprises 154 residues: 3-hydroxyacyl-[acyl-carrier-protein] dehydratase FabZ (154 aa).

His-55 is a catalytic residue.

Belongs to the thioester dehydratase family. FabZ subfamily.

The protein resides in the cytoplasm. The enzyme catalyses a (3R)-hydroxyacyl-[ACP] = a (2E)-enoyl-[ACP] + H2O. Involved in unsaturated fatty acids biosynthesis. Catalyzes the dehydration of short chain beta-hydroxyacyl-ACPs and long chain saturated and unsaturated beta-hydroxyacyl-ACPs. This chain is 3-hydroxyacyl-[acyl-carrier-protein] dehydratase FabZ, found in Oleidesulfovibrio alaskensis (strain ATCC BAA-1058 / DSM 17464 / G20) (Desulfovibrio alaskensis).